The primary structure comprises 506 residues: 2,3-bisphosphoglycerate-independent phosphoglycerate mutase (506 aa).

The Mn(2+) site is built by Asp-12 and Ser-63. Ser-63 serves as the catalytic Phosphoserine intermediate. Residues His-122, 151 to 152 (RD), Arg-182, Arg-188, 253 to 256 (RADR), and Lys-323 contribute to the substrate site. Mn(2+) contacts are provided by Asp-390, His-394, Asp-432, His-433, and His-451.

Belongs to the BPG-independent phosphoglycerate mutase family. Monomer. The cofactor is Mn(2+).

The enzyme catalyses (2R)-2-phosphoglycerate = (2R)-3-phosphoglycerate. It participates in carbohydrate degradation; glycolysis; pyruvate from D-glyceraldehyde 3-phosphate: step 3/5. Functionally, catalyzes the interconversion of 2-phosphoglycerate and 3-phosphoglycerate. This is 2,3-bisphosphoglycerate-independent phosphoglycerate mutase from Wolbachia pipientis wMel.